Here is a 203-residue protein sequence, read N- to C-terminus: Peptide deformylase (203 aa).

Fe cation is bound by residues Cys130 and His173. Glu174 is a catalytic residue. Residue His177 coordinates Fe cation.

The protein belongs to the polypeptide deformylase family. Fe(2+) serves as cofactor.

The enzyme catalyses N-terminal N-formyl-L-methionyl-[peptide] + H2O = N-terminal L-methionyl-[peptide] + formate. Functionally, removes the formyl group from the N-terminal Met of newly synthesized proteins. Requires at least a dipeptide for an efficient rate of reaction. N-terminal L-methionine is a prerequisite for activity but the enzyme has broad specificity at other positions. The polypeptide is Peptide deformylase (Streptococcus pneumoniae serotype 4 (strain ATCC BAA-334 / TIGR4)).